A 533-amino-acid chain; its full sequence is Probable fucosyltransferase 5 (533 aa).

The Cytoplasmic portion of the chain corresponds to 1–13 (MYQKFQISGKIVK). A helical; Signal-anchor for type II membrane protein membrane pass occupies residues 14-34 (TLGLKMKVLIAVSFGSLLFIL). The Lumenal portion of the chain corresponds to 35–533 (SYSNNFNNKL…YGGLKLYDEF (499 aa)). Residues N202, N227, N374, N396, and N475 are each glycosylated (N-linked (GlcNAc...) asparagine).

It belongs to the glycosyltransferase 37 family. As to expression, expressed in roots, leaves, flowers and siliques.

It localises to the golgi apparatus. It is found in the golgi stack membrane. Its pathway is protein modification; protein glycosylation. In terms of biological role, may be involved in cell wall biosynthesis. May act as a fucosyltransferase. In Arabidopsis thaliana (Mouse-ear cress), this protein is Probable fucosyltransferase 5 (FUT5).